The primary structure comprises 418 residues: Zinc metalloproteinase nas-8 (418 aa).

The signal sequence occupies residues 1–28 (MMNRASLCRIAVLLCILHLSHLIDSTYA). A propeptide spanning residues 29 to 100 (QSYLTEKDFL…TSKLKSGVRR (72 aa)) is cleaved from the precursor. Residues 101–296 (NGVTSVIKRW…LKINKLYNCP (196 aa)) enclose the Peptidase M12A domain. 5 disulfide bridges follow: cysteine 143–cysteine 295, cysteine 165–cysteine 184, cysteine 347–cysteine 381, cysteine 354–cysteine 374, and cysteine 361–cysteine 378. Histidine 192 provides a ligand contact to Zn(2+). Residue glutamate 193 is part of the active site. Residues histidine 196 and histidine 202 each coordinate Zn(2+). Positions 347–381 (CSDRTNLCWRWLDRCRSYFFEKIMKEFCALSCGYC) constitute a ShKT domain.

It depends on Zn(2+) as a cofactor.

It is found in the secreted. It catalyses the reaction Hydrolysis of peptide bonds in substrates containing five or more amino acids, preferentially with Ala in P1', and Pro in P2'.. With respect to regulation, inhibited by ethylene glycol-bis(2-aminoethylether)-N,N,N,N-tetraacetic acid (EGTA), ethylenediaminetetraacetic acid (EDTA) and o-phenanthroline. In terms of biological role, metalloprotease. The protein is Zinc metalloproteinase nas-8 of Steinernema carpocapsae (Entomopathogenic nematode).